The following is a 357-amino-acid chain: Neutral protease 2 homolog BDCG_00922 (357 aa).

An N-terminal signal peptide occupies residues 1–19 (MRSPQSILAIVAFATTAIA). Positions 20–182 (GVVPSTEKRA…FASLNQFSKR (163 aa)) are excised as a propeptide. Intrachain disulfides connect Cys-188–Cys-259, Cys-266–Cys-284, and Cys-297–Cys-357. His-308 contributes to the Zn(2+) binding site. The active site involves Glu-309. Zn(2+) contacts are provided by His-312 and Asp-323.

Belongs to the peptidase M35 family. It depends on Zn(2+) as a cofactor.

It is found in the secreted. It catalyses the reaction Preferential cleavage of bonds with hydrophobic residues in P1'. Also 3-Asn-|-Gln-4 and 8-Gly-|-Ser-9 bonds in insulin B chain.. Functionally, secreted metalloproteinase that allows assimilation of proteinaceous substrates. Shows high activities on basic nuclear substrates such as histone and protamine. This chain is Neutral protease 2 homolog BDCG_00922, found in Ajellomyces dermatitidis (strain ER-3 / ATCC MYA-2586) (Blastomyces dermatitidis).